Reading from the N-terminus, the 277-residue chain is Large ribosomal subunit protein uL2 (277 aa).

The segment at 215-277 is disordered; sequence GIRPTVRGSV…KLIVKRRNDK (63 aa). Residues 264-277 show a composition bias toward basic and acidic residues; the sequence is KYSDKLIVKRRNDK.

This sequence belongs to the universal ribosomal protein uL2 family. In terms of assembly, part of the 50S ribosomal subunit. Forms a bridge to the 30S subunit in the 70S ribosome.

Functionally, one of the primary rRNA binding proteins. Required for association of the 30S and 50S subunits to form the 70S ribosome, for tRNA binding and peptide bond formation. It has been suggested to have peptidyltransferase activity; this is somewhat controversial. Makes several contacts with the 16S rRNA in the 70S ribosome. The chain is Large ribosomal subunit protein uL2 from Clostridium acetobutylicum (strain ATCC 824 / DSM 792 / JCM 1419 / IAM 19013 / LMG 5710 / NBRC 13948 / NRRL B-527 / VKM B-1787 / 2291 / W).